Here is a 228-residue protein sequence, read N- to C-terminus: Caspase recruitment domain-containing protein 19 (228 aa).

Residues cysteine 7 and cysteine 77 are joined by a disulfide bond. Positions 8 to 99 (DRLVQDTPFL…PLHSRLPSRH (92 aa)) constitute a CARD domain. Valine 113 carries the phosphoserine modification.

Associates with BCL10 by CARD-CARD interaction. In terms of tissue distribution, expressed in ovary, testis, placenta, skeletal muscle, kidney, lung, heart and liver (at protein level). Expressed in thymus and brain.

The protein resides in the nucleus. It localises to the endoplasmic reticulum membrane. The protein localises to the mitochondrion membrane. Functionally, plays a role in inhibiting the effects of BCL10-induced activation of NF-kappa-B. May inhibit the phosphorylation of BCL10 in a CARD-dependent manner. In Homo sapiens (Human), this protein is Caspase recruitment domain-containing protein 19 (CARD19).